The sequence spans 339 residues: Tetraacyldisaccharide 4'-kinase (339 aa).

58–65 (TVGGSGKT) is a binding site for ATP.

The protein belongs to the LpxK family.

The enzyme catalyses a lipid A disaccharide + ATP = a lipid IVA + ADP + H(+). Its pathway is glycolipid biosynthesis; lipid IV(A) biosynthesis; lipid IV(A) from (3R)-3-hydroxytetradecanoyl-[acyl-carrier-protein] and UDP-N-acetyl-alpha-D-glucosamine: step 6/6. In terms of biological role, transfers the gamma-phosphate of ATP to the 4'-position of a tetraacyldisaccharide 1-phosphate intermediate (termed DS-1-P) to form tetraacyldisaccharide 1,4'-bis-phosphate (lipid IVA). The protein is Tetraacyldisaccharide 4'-kinase of Shewanella baltica (strain OS155 / ATCC BAA-1091).